A 570-amino-acid chain; its full sequence is PTS system lactose-specific EIICB component (570 aa).

One can recognise a PTS EIIC type-3 domain in the interval Ile9–Phe410. Helical transmembrane passes span Gly31–Val51, Ala65–Thr85, Ile104–Pro124, Ala133–Val153, Phe178–Ile198, Gly223–His243, Met283–Trp303, Val340–Val360, and Ile382–Val402. The PTS EIIB type-3 domain occupies Gln467–Asn570. The active-site Phosphocysteine intermediate; for EIIB activity is Cys474. At Cys474 the chain carries Phosphocysteine; by EIIA.

The protein localises to the cell membrane. The catalysed reaction is lactose(out) + N(pros)-phospho-L-histidyl-[protein] = lactose 6-phosphate(in) + L-histidyl-[protein]. The phosphoenolpyruvate-dependent sugar phosphotransferase system (sugar PTS), a major carbohydrate active transport system, catalyzes the phosphorylation of incoming sugar substrates concomitantly with their translocation across the cell membrane. The enzyme II LacEF PTS system is involved in lactose transport. The chain is PTS system lactose-specific EIICB component from Staphylococcus aureus (strain MSSA476).